The chain runs to 408 residues: 4-hydroxy-3-methylbut-2-en-1-yl diphosphate synthase (ferredoxin) (408 aa).

Positions 1-21 (MQTLPTPTTSSNTANQSTFDT) are enriched in polar residues. Residues 1 to 26 (MQTLPTPTTSSNTANQSTFDTTIKRR) form a disordered region. Positions 317, 320, 351, and 358 each coordinate [4Fe-4S] cluster.

The protein belongs to the IspG family. [4Fe-4S] cluster is required as a cofactor.

It catalyses the reaction (2E)-4-hydroxy-3-methylbut-2-enyl diphosphate + 2 oxidized [2Fe-2S]-[ferredoxin] + H2O = 2-C-methyl-D-erythritol 2,4-cyclic diphosphate + 2 reduced [2Fe-2S]-[ferredoxin] + H(+). The protein operates within isoprenoid biosynthesis; isopentenyl diphosphate biosynthesis via DXP pathway; isopentenyl diphosphate from 1-deoxy-D-xylulose 5-phosphate: step 5/6. Its function is as follows. Converts 2C-methyl-D-erythritol 2,4-cyclodiphosphate (ME-2,4cPP) into 1-hydroxy-2-methyl-2-(E)-butenyl 4-diphosphate. The polypeptide is 4-hydroxy-3-methylbut-2-en-1-yl diphosphate synthase (ferredoxin) (Trichormus variabilis (strain ATCC 29413 / PCC 7937) (Anabaena variabilis)).